We begin with the raw amino-acid sequence, 181 residues long: Early E3 20.3 kDa glycoprotein (181 aa).

Asn-29, Asn-57, Asn-70, and Asn-75 each carry an N-linked (GlcNAc...) asparagine; by host glycan.

The protein belongs to the adenoviridae E3_20 family.

In terms of biological role, E3 proteins seem to be dispensable for virus growth in tissue culture cells. They are potentially important for virus growth under special conditions; E3 region may help adenoviruses to evade the immune surveillance of the host. This chain is Early E3 20.3 kDa glycoprotein, found in Homo sapiens (Human).